A 180-amino-acid chain; its full sequence is Fucolectin-2 (180 aa).

The N-terminal stretch at 1 to 22 (MKVKMIMLLFQILAILTLKSDS) is a signal peptide. Residues 31–179 (QENVALRGRA…VEVNVLFPAP (149 aa)) are F5/8 type C-like. 4 residues coordinate Ca(2+): Asn-58, Asp-61, Asn-63, and Ser-72. Intrachain disulfides connect Cys-73/Cys-168, Cys-104/Cys-105, and Cys-130/Cys-146. 2 residues coordinate alpha-L-fucose: His-75 and Arg-101. Residues 101-103 (RGD) carry the Cell attachment site motif. Position 108 (Arg-108) interacts with alpha-L-fucose. Ca(2+) contacts are provided by Cys-168 and Glu-169.

The protein belongs to the fucolectin family. In terms of assembly, homotrimer. In terms of tissue distribution, parenchymal hepatocytes.

The protein resides in the secreted. It localises to the extracellular space. Acts as a defensive agent. Recognizes blood group fucosylated oligosaccharides including A, B, H and Lewis B-type antigens. Does not recognize Lewis A antigen and has low affinity for monovalent haptens. The sequence is that of Fucolectin-2 from Anguilla japonica (Japanese eel).